Reading from the N-terminus, the 145-residue chain is Photosystem I reaction center subunit XI (145 aa).

Helical transmembrane passes span 48 to 68, 75 to 95, and 125 to 145; these read LEIG…LGPL, LLVG…GLTI, and IGAF…SFFA.

It belongs to the PsaL family.

The protein localises to the plastid. Its subcellular location is the chloroplast thylakoid membrane. The polypeptide is Photosystem I reaction center subunit XI (Emiliania huxleyi (Coccolithophore)).